A 216-amino-acid chain; its full sequence is Probable GTP-binding protein EngB (216 aa).

The 178-residue stretch at 37-214 folds into the EngB-type G domain; the sequence is AGLEVAFAGR…RAAMIKLIAE (178 aa). GTP contacts are provided by residues 45–52, 72–76, 92–95, 159–162, and 193–195; these read GRSNVGKS, GRTQE, DMPG, TKAD, and TSS. Residues Ser-52 and Thr-74 each coordinate Mg(2+).

Belongs to the TRAFAC class TrmE-Era-EngA-EngB-Septin-like GTPase superfamily. EngB GTPase family. Requires Mg(2+) as cofactor.

In terms of biological role, necessary for normal cell division and for the maintenance of normal septation. The polypeptide is Probable GTP-binding protein EngB (Rhodopseudomonas palustris (strain BisB18)).